Here is a 147-residue protein sequence, read N- to C-terminus: uncharacterized protein (147 aa).

The HTH LytTR-type domain occupies 44–147 (LVGYIDKEIH…LKSIKERLSI (104 aa)).

Its subcellular location is the cytoplasm. This is an uncharacterized protein from Staphylococcus aureus (strain bovine RF122 / ET3-1).